A 371-amino-acid polypeptide reads, in one-letter code: D-alanine--D-alanine ligase (371 aa).

Residues 154 to 361 (KKLLVAEGLP…YPTLLAAMVD (208 aa)) form the ATP-grasp domain. Position 182-237 (182-237 (RERLGLPVFVKPARGGSSIGVSRVSDWAELPAAIEAARRHDPKVIVEAGIAGRELE)) interacts with ATP. Mg(2+) is bound by residues D316, E328, and N330.

Belongs to the D-alanine--D-alanine ligase family. It depends on Mg(2+) as a cofactor. Mn(2+) serves as cofactor.

It is found in the cytoplasm. It carries out the reaction 2 D-alanine + ATP = D-alanyl-D-alanine + ADP + phosphate + H(+). Its pathway is cell wall biogenesis; peptidoglycan biosynthesis. Cell wall formation. The sequence is that of D-alanine--D-alanine ligase from Mycobacterium sp. (strain KMS).